Reading from the N-terminus, the 350-residue chain is Phosphoribosylformylglycinamidine cyclo-ligase (350 aa).

This sequence belongs to the AIR synthase family.

Its subcellular location is the cytoplasm. The enzyme catalyses 2-formamido-N(1)-(5-O-phospho-beta-D-ribosyl)acetamidine + ATP = 5-amino-1-(5-phospho-beta-D-ribosyl)imidazole + ADP + phosphate + H(+). Its pathway is purine metabolism; IMP biosynthesis via de novo pathway; 5-amino-1-(5-phospho-D-ribosyl)imidazole from N(2)-formyl-N(1)-(5-phospho-D-ribosyl)glycinamide: step 2/2. This is Phosphoribosylformylglycinamidine cyclo-ligase from Pseudoalteromonas translucida (strain TAC 125).